We begin with the raw amino-acid sequence, 326 residues long: Adenosine receptor A1 (326 aa).

The Extracellular portion of the chain corresponds to 1 to 10 (MPPAISAFQA). A helical transmembrane segment spans residues 11–33 (AYIGIEVLIALVSVPGNVLVIWA). At 34 to 46 (VKVNQALRDATFC) the chain is on the cytoplasmic side. The chain crosses the membrane as a helical span at residues 47–69 (FIVSLAVADVAVGALVIPLAILI). Residues 70 to 80 (NIGPRTYFHTC) are Extracellular-facing. An intrachain disulfide couples C80 to C169. Residues 81-102 (LMVACPVLILTQSSILALLAIA) traverse the membrane as a helical segment. Residues 103–123 (VDRYLRVKIPLRYKTVVTPRR) lie on the Cytoplasmic side of the membrane. The chain crosses the membrane as a helical span at residues 124–146 (AAVAIAGCWILSFVVGLTPLFGW). The Extracellular segment spans residues 147 to 176 (NRLGEAQRAWAANGSGGEPVIKCEFEKVIS). A glycan (N-linked (GlcNAc...) asparagine) is linked at N159. The helical transmembrane segment at 177–201 (MEYMVYFNFFVWVLPPLLLMVLIYL) threads the bilayer. Residues 202–235 (EVFYLIRRQLGKKVSASSGDPQKYYGKELKIAKS) lie on the Cytoplasmic side of the membrane. The helical transmembrane segment at 236-259 (LALILFLFALSWLPLHILNCITLF) threads the bilayer. The Extracellular segment spans residues 260-267 (CPSCRKPS). A helical transmembrane segment spans residues 268-292 (ILMYIAIFLTHGNSAMNPIVYAFRI). At 293–326 (QKFRVTFLKIWNDHFRCQPTPPVDEDPPEEAPHD) the chain is on the cytoplasmic side. C309 carries S-palmitoyl cysteine lipidation.

This sequence belongs to the G-protein coupled receptor 1 family.

It localises to the cell membrane. Functionally, receptor for adenosine. The activity of this receptor is mediated by G proteins which inhibit adenylyl cyclase. This is Adenosine receptor A1 (ADORA1) from Canis lupus familiaris (Dog).